Consider the following 245-residue polypeptide: 1-(5-phosphoribosyl)-5-[(5-phosphoribosylamino)methylideneamino] imidazole-4-carboxamide isomerase (245 aa).

Catalysis depends on Asp7, which acts as the Proton acceptor. The active-site Proton donor is the Asp129.

This sequence belongs to the HisA/HisF family.

Its subcellular location is the cytoplasm. It catalyses the reaction 1-(5-phospho-beta-D-ribosyl)-5-[(5-phospho-beta-D-ribosylamino)methylideneamino]imidazole-4-carboxamide = 5-[(5-phospho-1-deoxy-D-ribulos-1-ylimino)methylamino]-1-(5-phospho-beta-D-ribosyl)imidazole-4-carboxamide. It functions in the pathway amino-acid biosynthesis; L-histidine biosynthesis; L-histidine from 5-phospho-alpha-D-ribose 1-diphosphate: step 4/9. This is 1-(5-phosphoribosyl)-5-[(5-phosphoribosylamino)methylideneamino] imidazole-4-carboxamide isomerase from Escherichia coli (strain ATCC 8739 / DSM 1576 / NBRC 3972 / NCIMB 8545 / WDCM 00012 / Crooks).